The chain runs to 396 residues: L-cysteine desulfidase (396 aa).

Catalysis depends on C23, which acts as the Proton acceptor. [4Fe-4S] cluster-binding residues include C288, C330, and C337.

The protein belongs to the L-cysteine desulfidase family. In terms of assembly, homotrimer. [4Fe-4S] cluster serves as cofactor.

It catalyses the reaction L-cysteine + H2O = hydrogen sulfide + pyruvate + NH4(+) + H(+). Catalyzes the cleavage of L-cysteine to form 2-aminoprop-2-enoate and sulfide. The former then spontaneously hydrolyzes to pyruvate and NH(3). May be responsible for the production of sulfide required for the biosynthesis of iron-sulfur centers in this archaea. This is L-cysteine desulfidase from Methanococcus maripaludis (strain C6 / ATCC BAA-1332).